The primary structure comprises 147 residues: uncharacterized protein (147 aa).

The disordered stretch occupies residues 29–147 (PYGNNSVHQG…GHHHGHHHKH (119 aa)). Polar residues-rich tracts occupy residues 34-45 (SVHQGQPHTDQN) and 60-73 (PQAQ…NQPS). The segment covering 75-92 (PFGGAGYTGPTAGTGFGN) has biased composition (gly residues). Residues 122-147 (DGHHKKHGRKEHDHHHGHHHGHHHKH) show a composition bias toward basic residues.

This is an uncharacterized protein from Caenorhabditis elegans.